Here is a 439-residue protein sequence, read N- to C-terminus: uncharacterized protein (439 aa).

Positions 1-22 are cleaved as a signal peptide; that stretch reads MWVALKRFGFLSGLLALTVLSA. Cys23 carries the N-palmitoyl cysteine lipid modification. Cys23 carries the S-diacylglycerol cysteine lipid modification.

Belongs to the MG067/MG068/MG395 family.

The protein resides in the cell membrane. This is an uncharacterized protein from Mycoplasma pneumoniae (strain ATCC 29342 / M129 / Subtype 1) (Mycoplasmoides pneumoniae).